A 94-amino-acid polypeptide reads, in one-letter code: Co-chaperonin GroES (94 aa).

This sequence belongs to the GroES chaperonin family. In terms of assembly, heptamer of 7 subunits arranged in a ring. Interacts with the chaperonin GroEL.

It is found in the cytoplasm. Together with the chaperonin GroEL, plays an essential role in assisting protein folding. The GroEL-GroES system forms a nano-cage that allows encapsulation of the non-native substrate proteins and provides a physical environment optimized to promote and accelerate protein folding. GroES binds to the apical surface of the GroEL ring, thereby capping the opening of the GroEL channel. The polypeptide is Co-chaperonin GroES (Heliobacterium modesticaldum (strain ATCC 51547 / Ice1)).